Reading from the N-terminus, the 72-residue chain is Large ribosomal subunit protein bL32 (72 aa).

The protein belongs to the bacterial ribosomal protein bL32 family.

This chain is Large ribosomal subunit protein bL32, found in Dehalococcoides mccartyi (strain ATCC BAA-2100 / JCM 16839 / KCTC 5957 / BAV1).